The primary structure comprises 2249 residues: Endoribonuclease Dcr-1 (2249 aa).

Positions 1-371 are essential for miRNA substrate recognition; it reads MAFHWCDNNL…SPKVRRLLQT (371 aa). An important for interaction with loqs isoform PB (loqs-PB) region spans residues 1 to 690; it reads MAFHWCDNNL…SKQPPTACDI (690 aa). A helicase domain region spans residues 1–761; the sequence is MAFHWCDNNL…AEIDTAHSLA (761 aa). Positions 1–1042 are necessary for processing certain pre-miRNas, such as pre-let 7 and pre-bantam; sequence MAFHWCDNNL…VSLELAKERV (1042 aa). 37–44 provides a ligand contact to ATP; that stretch reads LGHRSSKE. The interval 371-491 is dispensable for activity and substrate recognition; that stretch reads TLRCFKPEEV…HHRDHNDGSD (121 aa). The interval 436–486 is disordered; it reads TTEDRQTNRSAARVTPTPTPAHAKPKPSSGANTAQPRTRRRVYTRRHHRDH. Residues 472-484 are compositionally biased toward basic residues; that stretch reads RTRRRVYTRRHHR. A Helicase C-terminal domain is found at 485–648; the sequence is DHNDGSDTLC…TGDTTEADSD (164 aa). Residues 496 to 606 form an essential for miRNA substrate recognition region; sequence LIYCNQNHTA…VQCKGRARAA (111 aa). A dispensable for activity and substrate recognition region spans residues 617-761; that stretch reads SYKSPTVGSV…AEIDTAHSLA (145 aa). Disordered stretches follow at residues 640-665 and 705-757; these read GDTTEADSDSDDSAMPNSSGSDPYTF and LDTS…IDTA. Low complexity predominate over residues 716–726; that stretch reads SMSNTSPSESS. A Dicer dsRNA-binding fold domain is found at 825-920; the sequence is AIALVNKYCA…QPIGKEGFRA (96 aa). Residues 924 to 957 are wing domain; it reads DWECFELEPEDEQIVQLSDEPRPGTTKRRQYYYK. The interval 963-1108 is platform domain; sequence FCDCRPVAGA…WQFLELIQAN (146 aa). One can recognise a PAZ domain in the interval 1100–1246; the sequence is QFLELIQANG…LVPELCTVHP (147 aa). The interval 1147–2249 is essential for production of mature miRNAs from pre-miRNAs. Also important for proper formation of the siRISC complex but is dispensable for biogenesis of siRNAs; the sequence is QYFYVAEICP…KKQGLIAKKD (1103 aa). The tract at residues 1314-1351 is disordered; that stretch reads ESKQKESLKDDTINGKDLADVEKKPTSEETQLDKDSKD. S1423 carries the phosphoserine modification. The interval 1426-1477 is disordered; sequence FWDVSNGESGFKGPKSSQNKQGGKGKAKGPAKPTFNYYDSDNSLGSSYDDDD. Residues 1437-1446 are compositionally biased toward low complexity; it reads KGPKSSQNKQ. A compositionally biased stretch (polar residues) spans 1462–1471; sequence YYDSDNSLGS. 2 RNase III domains span residues 1698–1919 and 1993–2150; these read ITSA…IECG and FEEF…LDSN. The Mg(2+) site is built by E1745 and D1749. 2 positions are modified to phosphoserine: S1877 and S1880. Residues D1905, E1908, E2032, D2136, and E2139 each contribute to the Mg(2+) site. The 67-residue stretch at 2175 to 2241 folds into the DRBM domain; it reads VPKSPIRELL…AKCALRQLKK (67 aa).

This sequence belongs to the helicase family. Dicer subfamily. In terms of assembly, component of the miRNA-directed RISC loading complex (miRLC), composed of at least Dcr-1, AGO1 and loqs, which processes pre-miRNAs and loads the resulting miRNAs into the Argonaute 1 (AGO1)-containing RNA-induced silencing complex (miRISC). Interacts (via helicase domain) with dicing cofactor loqs isoform-PB (loqs-PB) (via DRBM 3 domain); this interaction enhances processing of pre-miRNAs by increasing substrate binding affinity of the dicer. Also able to interact with loqs isoforms PA and PC, however the relevance of such interactions are unclear in vivo. Different regions of the Dcr-1-loqs-PB heterodimer collaborate to recognize, bind and position the pre-miRNA for Dcr-1 mediated cleavage. In the absence of authentic miRNA substrates, the heterodimer favors a closed, catalytically incompetent, conformation, whereas binding of authentic pre-miRNA substrates stabilizes the relatively rare open, catalytically competent, conformation of the heterodimer. During substrate recognition, the Dcr-1 PAZ domain and pre-miRNA interact with the DRBM 1 domain of loqs-PB, which likely contributes to substrate recognition and stabilization. At the miRNA binding stage, the Dcr-1 DRBM domain and loqs-PB DRBM domains then bind the pre-miRNA in tandem to form a tight 'belt' around the pre-miRNA stem, the pre-miRNA loop is docked in the loop-binding region formed by DUF283, DRBM and part of the N terminus of Dcr-1, and the loqs-PB DRBM 1 and the wing domain of Dcr-1 act together to bind the 5' and 3' pre-miRNA termini within the PAZ and platform domains of Dcr-1. These interactions between the proteins and their pre-miRNA substrate stabilize a distorted form of the pre-miRNA and position the scissile phosphodiester bonds of the pre-miRNA at the RNase III catalytic cleavage sites of Dcr-1. Following Dcr-1 mediated cleavage, the miRNA duplex remains bound to loqs-PB DRBM 1, which dissociates from the Dcr-1 RNase III 1 domain but remains in contact with the PAZ and wing domains, suggesting that the heterodimer presents the mature miRNA to Ago2 for loading into the RNA-induced silencing complex (miRISC). Interacts with AGO2 and Fmr1 to form a RNA-induced silencing complex (siRISC), a ribonucleoprotein (RNP) complex involved in translation regulation; other components of the complex are RpL5, RpL11, AGO2 and Rm62. Interacts with piwi and vas; these interactions occur in the polar granules. The cofactor is Mg(2+). Mn(2+) serves as cofactor.

It is found in the cytoplasm. The protein localises to the cytosol. The enzyme catalyses Endonucleolytic cleavage to 5'-phosphomonoester.. Activity towards pre-miRNAs is not inhibited by inorganic phosphate. In terms of biological role, endoribonuclease which functions in microRNA- (miRNA) gene silencing and, independently of its ribonuclease III activity, also acts in the short interfering RNA- (siRNA) gene silencing pathway. Cleaves hairpin precursor miRNAs (pre-miRNA) to generate mature miRNAs (miRNAs) that are between twenty-one to twenty-four nucleotides in length and function in RNA silencing and post-transcriptional regulation of gene expression. Also functions in miRNA loading and assembly of the Argonaute 1 (AGO1)-containing RNA-induced silencing complex (miRISC), with the miRNAs serving as a guide to direct the miRISC to complementary RNAs to degrade them or prevent their translation. Independently of its catalytic activity, functions in the siRNA silencing pathway by promoting assembly of the siRNA-directed Argonaute 2 (AGO2)-containing RISC (siRISC). Required for the proper formation of a stable intermediate (R2) in siRISC assembly, which is formed from the R1 precursor complex (containing Dcr-2, R2D2 and the siRNA) and is used for assembly of the mature (R3) siRISC complex. It is not required for siRNA biogenesis. During embryogenesis, involved in germline fate determination. Post-transcriptionally regulates mei-P26 expression through the microRNA pathway, which in turn post-translationally regulates myc protein levels; involved in regulating cell and tissue growth. This is Endoribonuclease Dcr-1 from Drosophila melanogaster (Fruit fly).